We begin with the raw amino-acid sequence, 319 residues long: MVTIVDTLSNTPLRPRHPEKANRPDSISPAKPSWIRVKAPTTRGYADTRNIVRENGLVTVCEEAGCPNIGECWDKKHATFMIMGDTCTRACAFCNVKTGLPAALDAGEPEHVAEATFKLGLAHVVVTSVDRDDLADGGAAHIAATIRAIRATCPTTTIEVLTPDFLRKDGALEQVVAAKPDVFNHNLETVPSRYLSVRPGARYFHSIRLLQRVKEIDPTIFTKSGIMVGLGEQRHEVLQVMDDLRSAEVDFLTIGQYLQPTKKHHAVMAYVTPEEFSNYETVAYTKGFLMVSASPLTRSSHHAGEDFAKLKAARDALAR.

Residues 1–12 (MVTIVDTLSNTP) are compositionally biased toward polar residues. Residues 1–32 (MVTIVDTLSNTPLRPRHPEKANRPDSISPAKP) are disordered. The [4Fe-4S] cluster site is built by Cys61, Cys66, Cys72, Cys87, Cys91, Cys94, and Ser300. In terms of domain architecture, Radical SAM core spans 73 to 289 (WDKKHATFMI…ETVAYTKGFL (217 aa)).

The protein belongs to the radical SAM superfamily. Lipoyl synthase family. The cofactor is [4Fe-4S] cluster.

It is found in the cytoplasm. The catalysed reaction is [[Fe-S] cluster scaffold protein carrying a second [4Fe-4S](2+) cluster] + N(6)-octanoyl-L-lysyl-[protein] + 2 oxidized [2Fe-2S]-[ferredoxin] + 2 S-adenosyl-L-methionine + 4 H(+) = [[Fe-S] cluster scaffold protein] + N(6)-[(R)-dihydrolipoyl]-L-lysyl-[protein] + 4 Fe(3+) + 2 hydrogen sulfide + 2 5'-deoxyadenosine + 2 L-methionine + 2 reduced [2Fe-2S]-[ferredoxin]. It participates in protein modification; protein lipoylation via endogenous pathway; protein N(6)-(lipoyl)lysine from octanoyl-[acyl-carrier-protein]: step 2/2. Its function is as follows. Catalyzes the radical-mediated insertion of two sulfur atoms into the C-6 and C-8 positions of the octanoyl moiety bound to the lipoyl domains of lipoate-dependent enzymes, thereby converting the octanoylated domains into lipoylated derivatives. This is Lipoyl synthase from Bradyrhizobium sp. (strain BTAi1 / ATCC BAA-1182).